We begin with the raw amino-acid sequence, 318 residues long: Protease HtpX homolog (318 aa).

The next 2 membrane-spanning stretches (helical) occupy residues 6–26 (TAML…LIGG) and 28–48 (AGMM…YWNS). His-130 lines the Zn(2+) pocket. Glu-131 is an active-site residue. Residue His-134 participates in Zn(2+) binding. A run of 2 helical transmembrane segments spans residues 145–165 (ITAT…FFGG) and 173–193 (PLGF…AMLV). Residue Glu-202 coordinates Zn(2+). Residues 284-318 (NVSTGPVRAVNPTRKSRSVPNTGRGGSQPPRGPWS) are disordered.

It belongs to the peptidase M48B family. Zn(2+) is required as a cofactor.

The protein localises to the cell inner membrane. In Rhizobium etli (strain CIAT 652), this protein is Protease HtpX homolog.